Consider the following 457-residue polypeptide: tRNA-2-methylthio-N(6)-dimethylallyladenosine synthase (457 aa).

The region spanning 3–120 is the MTTase N-terminal domain; that stretch reads KKVYVKTFGC…LPQMIDARRA (118 aa). Residues Cys12, Cys49, Cys83, Cys157, Cys161, and Cys164 each contribute to the [4Fe-4S] cluster site. Residues 143–377 enclose the Radical SAM core domain; that stretch reads RVEGPSAFVS…QATIEENVAR (235 aa). In terms of domain architecture, TRAM spans 380–447; the sequence is QSMVGKVERI…PHSLRGELLL (68 aa).

The protein belongs to the methylthiotransferase family. MiaB subfamily. In terms of assembly, monomer. It depends on [4Fe-4S] cluster as a cofactor.

The protein localises to the cytoplasm. It carries out the reaction N(6)-dimethylallyladenosine(37) in tRNA + (sulfur carrier)-SH + AH2 + 2 S-adenosyl-L-methionine = 2-methylsulfanyl-N(6)-dimethylallyladenosine(37) in tRNA + (sulfur carrier)-H + 5'-deoxyadenosine + L-methionine + A + S-adenosyl-L-homocysteine + 2 H(+). Catalyzes the methylthiolation of N6-(dimethylallyl)adenosine (i(6)A), leading to the formation of 2-methylthio-N6-(dimethylallyl)adenosine (ms(2)i(6)A) at position 37 in tRNAs that read codons beginning with uridine. This chain is tRNA-2-methylthio-N(6)-dimethylallyladenosine synthase, found in Burkholderia vietnamiensis (strain G4 / LMG 22486) (Burkholderia cepacia (strain R1808)).